An 84-amino-acid polypeptide reads, in one-letter code: uncharacterized protein (84 aa).

The protein belongs to the chlamydial CPn_0710/CT_666/TC_0037 family.

This is an uncharacterized protein from Chlamydia pneumoniae (Chlamydophila pneumoniae).